Consider the following 347-residue polypeptide: Protein pelota homolog (347 aa).

Belongs to the eukaryotic release factor 1 family. Pelota subfamily. Monomer. It depends on a divalent metal cation as a cofactor.

Its subcellular location is the cytoplasm. In terms of biological role, may function in recognizing stalled ribosomes, interact with stem-loop structures in stalled mRNA molecules, and effect endonucleolytic cleavage of the mRNA. May play a role in the release non-functional ribosomes and degradation of damaged mRNAs. Has endoribonuclease activity. This is Protein pelota homolog from Methanococcoides burtonii (strain DSM 6242 / NBRC 107633 / OCM 468 / ACE-M).